The primary structure comprises 287 residues: uncharacterized protein (287 aa).

Residues 43-50, 90-93, and 156-159 contribute to the GTP site; these read GKTGVGKS, DLPG, and DKAE. Residues 48–138 form the G domain; the sequence is GKSSLCNALF…LTVDEHFYHQ (91 aa).

The protein to E.coli YfjP and YeeP.

This is an uncharacterized protein from Escherichia coli (strain K12).